A 423-amino-acid chain; its full sequence is Gamma-glutamyl phosphate reductase (423 aa).

The protein belongs to the gamma-glutamyl phosphate reductase family.

The protein resides in the cytoplasm. The catalysed reaction is L-glutamate 5-semialdehyde + phosphate + NADP(+) = L-glutamyl 5-phosphate + NADPH + H(+). It functions in the pathway amino-acid biosynthesis; L-proline biosynthesis; L-glutamate 5-semialdehyde from L-glutamate: step 2/2. Functionally, catalyzes the NADPH-dependent reduction of L-glutamate 5-phosphate into L-glutamate 5-semialdehyde and phosphate. The product spontaneously undergoes cyclization to form 1-pyrroline-5-carboxylate. The polypeptide is Gamma-glutamyl phosphate reductase (Pseudomonas entomophila (strain L48)).